The following is a 3948-amino-acid chain: Hybrid PKS-NRPS synthetase ucsA (3948 aa).

The region spanning 11-440 (NEPIAVIGSG…GTNAHAILER (430 aa)) is the Ketosynthase family 3 (KS3) domain. Residues C184, H323, and H363 each act as for beta-ketoacyl synthase activity in the active site. Positions 548 to 881 (IFTGQGAQWP…FSTAIGQLWA (334 aa)) are malonyl-CoA:ACP transacylase (MAT) domain. An N-terminal hotdog fold region spans residues 940 to 1079 (HPLLGTLGAD…GHIRLTITDF (140 aa)). The dehydratase (DH) domain stretch occupies residues 940–1254 (HPLLGTLGAD…IRLIPFAAAS (315 aa)). Residues 940–1256 (HPLLGTLGAD…LIPFAAASEA (317 aa)) enclose the PKS/mFAS DH domain. H972 (proton acceptor; for dehydratase activity) is an active-site residue. The segment at 1098–1256 (MTEVDQNLFY…LIPFAAASEA (159 aa)) is C-terminal hotdog fold. The Proton donor; for dehydratase activity role is filled by D1161. The methyltransferase (MT) domain stretch occupies residues 1299-1460 (LAHVVGQITH…LRAGFTGVET (162 aa)). Residues 1989-2165 (TYILFGLAGA…ASVIDIGPIS (177 aa)) are ketoreductase (KR) domain. Residues 2275–2357 (DVARVLRHAI…GLVDFAVDNL (83 aa)) enclose the Carrier 1 domain. S2317 is modified (O-(pantetheine 4'-phosphoryl)serine). Residues 2381–2404 (PKAKTDAPAAAPTPASATAPGSKS) show a composition bias toward low complexity. Residues 2381-2473 (PKAKTDAPAA…SSQAASLESS (93 aa)) form a disordered region. Composition is skewed to polar residues over residues 2405 to 2418 (DGNV…ADQS) and 2426 to 2437 (PQPTAILTNATA). The segment covering 2441 to 2456 (PVSPSLSVTGSTSSAA) has biased composition (low complexity). The span at 2462 to 2473 (PTSSQAASLESS) shows a compositional bias: polar residues. The condensation (C) domain stretch occupies residues 2489–2926 (EKTLPMSYGQ…PQIFNSSKVQ (438 aa)). Positions 2950–3355 (DIAAVQPTLT…GEFVLQARIK (406 aa)) are adenylation (A) (KR) domain. A disordered region spans residues 3483-3507 (PLTNKGGLKETPVARPTRYQNDPIP). The 80-residue stretch at 3513–3592 (SSPFSSLDQV…QMASLLDGKD (80 aa)) folds into the Carrier 2 domain. S3552 bears the O-(pantetheine 4'-phosphoryl)serine mark. Residues 3633 to 3852 (LTGATGFLGL…QFVPVEDVAN (220 aa)) form a reductase (R) domain region.

In the C-terminal section; belongs to the NRP synthetase family.

It participates in mycotoxin biosynthesis. In terms of biological role, hybrid PKS-NRPS synthetase; part of the gene cluster that mediates the biosynthesis of UCS1025A, a member of the pyrrolizidinone family that acts as a strong telomerase inhibitor and displays potent antibacterial and antitumor properties. These compounds share a hemiaminal-containing pyrrolizidinone core fused with a gamma-lactone, giving a furopyrrolizidine that is connected to a decalin fragment. The polyketide synthase module (PKS) of the PKS-NRPS ucsA is responsible for the synthesis of the polyketide backbone via the condensation of an acetyl-CoA starter unit with 6 malonyl-CoA units. The downstream nonribosomal peptide synthetase (NRPS) module then amidates the carboxyl end of the polyketide with a 2S,3S-methylproline derived from L-isoleucine by the 2-oxoglutarate-dependent dioxygenase ucsF which converts L-isoleucine to (4S,5S)-4-methylpyrroline-5-carboxylate that is further converted to 2S,3S-methylproline by the pyrroline-5-carboxylate reductase ucsG. Reductive release of the completed aminoacyl polyketide from the assembly line can form the 3-pyrrolin-2-one structure via an intramolecular Knoevenagel reaction. Because ucsA lacks a designated enoylreductase (ER) domain, the required activity is provided the enoyl reductase ucsL. This keto acyclic precursor is the substrate of the Diels-Alderase ucsH, that catalyzes the Diels-Alder cycloaddition. Oxidation of the 3S-methyl group to a carboxylate by the cytochrome P450 monooxygenase ucsK allows an oxa-Michael cyclization that might involve the reductase/dehydrogenase ucsI and which furnishes the furopyrrolizidine. The oxidase ucsJ likely plays a critical role in stereoselective reduction of the C5-C6 double bond to afford the required R-configured carboxylate group. Further enolization and oxidation at C5 by an unidentified enzyme affords the last intermediate that can undergo oxa-Michael cyclization to yield UCS1025A. The sequence is that of Hybrid PKS-NRPS synthetase ucsA from Acremonium sp.